The sequence spans 759 residues: Subtilisin-like protease SBT3.10 (759 aa).

The N-terminal stretch at 1–25 (MSKTIILLAFFLSIVLNVQISFVVA) is a signal peptide. The propeptide at 26–108 (ESKVYVVYLG…VIPNTLYEMT (83 aa)) is activation peptide. Positions 29-106 (VYVVYLGEKE…VQVIPNTLYE (78 aa)) constitute an Inhibitor I9 domain. Residues 112-606 (TWDYLGVSPG…GGLINPEKAV (495 aa)) form the Peptidase S8 domain. The active-site Charge relay system is the aspartate 142. Asparagine 175 and asparagine 202 each carry an N-linked (GlcNAc...) asparagine glycan. Histidine 218 serves as the catalytic Charge relay system. N-linked (GlcNAc...) asparagine glycosylation is found at asparagine 233 and asparagine 361. The 75-residue stretch at 390–464 (DCEKLSANPK…ELGTDILFYI (75 aa)) folds into the PA domain. Serine 537 serves as the catalytic Charge relay system.

Belongs to the peptidase S8 family.

It is found in the secreted. This chain is Subtilisin-like protease SBT3.10, found in Arabidopsis thaliana (Mouse-ear cress).